The primary structure comprises 492 residues: Ethanolamine-phosphate phospho-lyase (492 aa).

Position 280 is an N6-(pyridoxal phosphate)lysine (Lys280). Residues 462 to 492 (ASDENGLVHPSNGNSHKHTSTIPLSKKTKRN) form a disordered region.

The protein belongs to the class-III pyridoxal-phosphate-dependent aminotransferase family. As to quaternary structure, homotetramer. Pyridoxal 5'-phosphate serves as cofactor.

Its subcellular location is the mitochondrion. The enzyme catalyses phosphoethanolamine + H2O = acetaldehyde + NH4(+) + phosphate. In terms of biological role, catalyzes the pyridoxal-phosphate-dependent breakdown of phosphoethanolamine, converting it to ammonia, inorganic phosphate and acetaldehyde. This is Ethanolamine-phosphate phospho-lyase (etnppl) from Danio rerio (Zebrafish).